The sequence spans 361 residues: UDP-N-acetylglucosamine--N-acetylmuramyl-(pentapeptide) pyrophosphoryl-undecaprenol N-acetylglucosamine transferase (361 aa).

Residues 11–13 (TGG), Asn124, Arg162, Ser193, and Gln292 each bind UDP-N-acetyl-alpha-D-glucosamine.

It belongs to the glycosyltransferase 28 family. MurG subfamily.

The protein localises to the cell inner membrane. It catalyses the reaction di-trans,octa-cis-undecaprenyl diphospho-N-acetyl-alpha-D-muramoyl-L-alanyl-D-glutamyl-meso-2,6-diaminopimeloyl-D-alanyl-D-alanine + UDP-N-acetyl-alpha-D-glucosamine = di-trans,octa-cis-undecaprenyl diphospho-[N-acetyl-alpha-D-glucosaminyl-(1-&gt;4)]-N-acetyl-alpha-D-muramoyl-L-alanyl-D-glutamyl-meso-2,6-diaminopimeloyl-D-alanyl-D-alanine + UDP + H(+). The protein operates within cell wall biogenesis; peptidoglycan biosynthesis. Cell wall formation. Catalyzes the transfer of a GlcNAc subunit on undecaprenyl-pyrophosphoryl-MurNAc-pentapeptide (lipid intermediate I) to form undecaprenyl-pyrophosphoryl-MurNAc-(pentapeptide)GlcNAc (lipid intermediate II). This is UDP-N-acetylglucosamine--N-acetylmuramyl-(pentapeptide) pyrophosphoryl-undecaprenol N-acetylglucosamine transferase from Elusimicrobium minutum (strain Pei191).